Reading from the N-terminus, the 93-residue chain is Protein BOLA2 (93 aa).

The residue at position 29 (C29) is an S-glutathionyl cysteine; transient; alternate. The segment at 72-93 (KAQTPQQWKPPSQDSATLTKDA) is disordered.

This sequence belongs to the bolA/yrbA family. Homodimer. Interacts in vitro with GRXS14, GRXS15, GRXS16 and GRXS17, but not with GRXC5. Interacts in vivo only with GRXS17. Post-translationally, can be either glutathionylated or forming covalent homodimers, depending on the oxidation state.

The protein resides in the cytoplasm. It localises to the nucleus. Functionally, may act either alone or in interaction with glutaredoxin as a redox-regulated transcriptional regulator, or as a factor regulating Fe-S cluster biogenesis. The GRXS17-BOLA2 heterodimer binds a labile, oxygen sensitive iron-sulfur cluster. This is Protein BOLA2 from Arabidopsis thaliana (Mouse-ear cress).